The chain runs to 170 residues: MKKLEDLILTYKDFPKKGIEFKDVLEILQYPDIFQDIILKMSSNQFLKKAEAIISIDARGFIFGSAVALESSKPMIVARKPGKLPGQLLTREYDLEYGKNSLSIQVNALKKFNSFVIVDDLLATGGTVKSVSRLIRDQKKKILGLITVVELKSLKGKSKLDFPVHSIVTL.

The protein belongs to the purine/pyrimidine phosphoribosyltransferase family. In terms of assembly, homodimer.

Its subcellular location is the cytoplasm. The catalysed reaction is AMP + diphosphate = 5-phospho-alpha-D-ribose 1-diphosphate + adenine. The protein operates within purine metabolism; AMP biosynthesis via salvage pathway; AMP from adenine: step 1/1. Its function is as follows. Catalyzes a salvage reaction resulting in the formation of AMP, that is energically less costly than de novo synthesis. This chain is Adenine phosphoribosyltransferase, found in Prochlorococcus marinus (strain AS9601).